Consider the following 738-residue polypeptide: Eukaryotic translation initiation factor 3 subunit B (738 aa).

Polar residues predominate over residues 1-10 (MAPSFENLSE). Residues 1 to 20 (MAPSFENLSEQDLHEEEEEE) form a disordered region. The region spanning 40–126 (TFVVIDGLPV…HTLLVNKLMD (87 aa)) is the RRM domain. 6 WD repeats span residues 193-230 (AHWTQLFVQWSPKGTYLASVHPQGVQLWGGPTFSKQKQ), 232-289 (PHPF…RSFV), 301-342 (QPKK…LLGK), 454-494 (SLKD…SFFA), 511-554 (IEKK…EKND), and 569-607 (VDHYGVTDIEWDPTGRYVVSGASAWTHQMENGFNLHTFS). The segment at 693 to 720 (EAYGLPEEADQPKAAKDAPTNTEDKGET) is disordered. Residues 702 to 720 (DQPKAAKDAPTNTEDKGET) show a composition bias toward basic and acidic residues.

This sequence belongs to the eIF-3 subunit B family. In terms of assembly, component of the eukaryotic translation initiation factor 3 (eIF-3) complex.

It localises to the cytoplasm. Its function is as follows. RNA-binding component of the eukaryotic translation initiation factor 3 (eIF-3) complex, which is involved in protein synthesis of a specialized repertoire of mRNAs and, together with other initiation factors, stimulates binding of mRNA and methionyl-tRNAi to the 40S ribosome. The eIF-3 complex specifically targets and initiates translation of a subset of mRNAs involved in cell proliferation. In Emericella nidulans (strain FGSC A4 / ATCC 38163 / CBS 112.46 / NRRL 194 / M139) (Aspergillus nidulans), this protein is Eukaryotic translation initiation factor 3 subunit B (prt1).